We begin with the raw amino-acid sequence, 488 residues long: MAGPVRCLPPVVEATSIPHAPPVISKEVSEIVNNMLSVAIPAAAAASAQDQRFASQFRCGPEFATMKAQALEACRKILAENDQGGYTIPAKGLYPYQWNWDSALVSLGLAEMEEERAWEELDRLMSAQWEDGMVPHIVFHKPSSTYFPGPEIWGSPDKPRNSTGITQPPVAAISVRRLLEEAKDKALALAMARKLFPKLLAWHRWFYRARDPEGTGLVATIHPWETGMDNSPAWDEALARVPIDDIPPYVRRDLGHVDAKMRPQKAEYDRYLTLLYRFRALDYDEAKLYYETPFRVTDLCTNCILHKANEDLLWLAGATGACTDESEIRGWTARANVAFDTLFDVEAGLYRCKDQLTGQFLPAATSAGFLPLFAGVASGEKASAVARTLGRWLDDVAYGIPSCDPRDPWFEALRYWRGPVWLIVNWMVSEGLKRYGYGELAQRVERDSYELVKNGGIFEYYCPLTGMGAGGGCFSWTAAMCLAWLFKS.

Substrate contacts are provided by residues Y94, W98–D101, Y146, Q167, and G227. D229 serves as the catalytic Proton donor. Residues R262 and Y415–W416 each bind substrate. The active-site Proton acceptor is E459.

The protein belongs to the glycosyl hydrolase 63 family.

It carries out the reaction (2R)-2-O-(alpha-D-mannosyl)-glycerate + H2O = D-mannose + (R)-glycerate. The catalysed reaction is (2R)-2-O-(alpha-D-glucopyranosyl)-glycerate + H2O = (R)-glycerate + D-glucose. Its activity is regulated as follows. Activity is not dependent on divalent cations, but it is enhanced by Mn(2+). Functionally, catalyzes the hydrolysis of alpha-D-mannosyl-glycerate (MG) to D-glycerate and D-mannose. Can also hydrolyze alpha-D-glucopyranosyl-glycerate (GG)with lower efficiency. In Selaginella moellendorffii (Spikemoss), this protein is Mannosylglycerate hydrolase MGH2.